The following is a 508-amino-acid chain: Small ribosomal subunit protein uS3m (508 aa).

It belongs to the universal ribosomal protein uS3 family. Component of the mitochondrial small ribosomal subunit (mt-SSU). Mature N.crassa 74S mitochondrial ribosomes consist of a small (37S) and a large (54S) subunit. The 37S small subunit contains a 16S ribosomal RNA (16S mt-rRNA) and 32 different proteins. The 54S large subunit contains a 23S rRNA (23S mt-rRNA) and 42 different proteins. uS3m, uS4m and uS5m form the narrow entry site of the mRNA channel.

It localises to the mitochondrion. In terms of biological role, component of the mitochondrial ribosome (mitoribosome), a dedicated translation machinery responsible for the synthesis of mitochondrial genome-encoded proteins, including at least some of the essential transmembrane subunits of the mitochondrial respiratory chain. The mitoribosomes are attached to the mitochondrial inner membrane and translation products are cotranslationally integrated into the membrane. uS3m is essential for mitochondrial protein synthesis and required for the maturation of small ribosomal subunits. In Neurospora crassa (strain ATCC 24698 / 74-OR23-1A / CBS 708.71 / DSM 1257 / FGSC 987), this protein is Small ribosomal subunit protein uS3m (var1).